We begin with the raw amino-acid sequence, 325 residues long: 5-dehydro-2-deoxygluconokinase (325 aa).

Belongs to the carbohydrate kinase PfkB family.

The enzyme catalyses 5-dehydro-2-deoxy-D-gluconate + ATP = 6-phospho-5-dehydro-2-deoxy-D-gluconate + ADP + H(+). The protein operates within polyol metabolism; myo-inositol degradation into acetyl-CoA; acetyl-CoA from myo-inositol: step 5/7. Catalyzes the phosphorylation of 5-dehydro-2-deoxy-D-gluconate (2-deoxy-5-keto-D-gluconate or DKG) to 6-phospho-5-dehydro-2-deoxy-D-gluconate (DKGP). This chain is 5-dehydro-2-deoxygluconokinase, found in Listeria monocytogenes serotype 4b (strain CLIP80459).